The sequence spans 425 residues: CinA-like protein (425 aa).

This sequence belongs to the CinA family.

The polypeptide is CinA-like protein (Mycobacterium marinum (strain ATCC BAA-535 / M)).